We begin with the raw amino-acid sequence, 426 residues long: Serine--tRNA ligase (426 aa).

An L-serine-binding site is contributed by 233–235 (TAE). 264 to 266 (RSE) serves as a coordination point for ATP. Glu287 provides a ligand contact to L-serine. 351 to 354 (EISS) is an ATP binding site. Ser387 contributes to the L-serine binding site.

It belongs to the class-II aminoacyl-tRNA synthetase family. Type-1 seryl-tRNA synthetase subfamily. As to quaternary structure, homodimer. The tRNA molecule binds across the dimer.

It is found in the cytoplasm. The enzyme catalyses tRNA(Ser) + L-serine + ATP = L-seryl-tRNA(Ser) + AMP + diphosphate + H(+). The catalysed reaction is tRNA(Sec) + L-serine + ATP = L-seryl-tRNA(Sec) + AMP + diphosphate + H(+). The protein operates within aminoacyl-tRNA biosynthesis; selenocysteinyl-tRNA(Sec) biosynthesis; L-seryl-tRNA(Sec) from L-serine and tRNA(Sec): step 1/1. Catalyzes the attachment of serine to tRNA(Ser). Is also able to aminoacylate tRNA(Sec) with serine, to form the misacylated tRNA L-seryl-tRNA(Sec), which will be further converted into selenocysteinyl-tRNA(Sec). The sequence is that of Serine--tRNA ligase from Pseudomonas fluorescens (strain Pf0-1).